Here is a 510-residue protein sequence, read N- to C-terminus: Calcium-dependent lipid-binding protein (510 aa).

The helical transmembrane segment at 1–21 (MGLISGILFGIIFGVALMAGW) threads the bilayer. SMP-LTD domains follow at residues 66–248 (AFEQ…VPIG) and 66–250 (AFEQ…IGGI). A phospholipid binding region spans residues 226-488 (DDTVDTIVKD…FMGRTITGQS (263 aa)). C2 domains follow at residues 242 to 362 (RIVV…ELEL) and 246 to 364 (PIGG…ELNL). Residues lysine 278, glutamate 279, aspartate 285, aspartate 333, lysine 334, aspartate 335, aspartate 339, and glutamate 340 each contribute to the Ca(2+) site. Residues 390–417 (EFNKEEQMAALEDEKKIMEERKRLKEAG) adopt a coiled-coil conformation. Residues 461 to 500 (MVGSGFGAVGSGLSKAGRFMGRTITGQSSKRSGSSTPVNT) enclose the C2 3 domain. The segment at 484 to 510 (ITGQSSKRSGSSTPVNTVPENDGAKQQ) is disordered.

The protein belongs to the synaptotagmin family. As to quaternary structure, interacts with the biotrophic pathogenic fungi Microbotryum violaceum effector MVLG_01732. Ca(2+) is required as a cofactor. In terms of tissue distribution, mostly expressed in rosette leaves and flowers, to lower extent, in cauline leaves, roots and stems, and, at low levels, in siliques.

Its subcellular location is the nucleus membrane. May be involved in membrane trafficking. Acts as a repressor of abiotic stress (e.g. drought and salt) responses by binding specifically to the promoter of THAS1 to regulate its transcription. Binds to membrane lipid ceramides. The chain is Calcium-dependent lipid-binding protein from Arabidopsis thaliana (Mouse-ear cress).